We begin with the raw amino-acid sequence, 218 residues long: Non-structural protein NS3 (218 aa).

Belongs to the orbivirus NS3 family.

Functionally, may play a role in the release of virions from infected cells. The chain is Non-structural protein NS3 (Segment-10) from Camelus dromedarius (Dromedary).